The sequence spans 71 residues: Exodeoxyribonuclease 7 small subunit (71 aa).

Belongs to the XseB family. In terms of assembly, heterooligomer composed of large and small subunits.

The protein localises to the cytoplasm. The catalysed reaction is Exonucleolytic cleavage in either 5'- to 3'- or 3'- to 5'-direction to yield nucleoside 5'-phosphates.. Functionally, bidirectionally degrades single-stranded DNA into large acid-insoluble oligonucleotides, which are then degraded further into small acid-soluble oligonucleotides. This Streptococcus equi subsp. equi (strain 4047) protein is Exodeoxyribonuclease 7 small subunit.